A 36-amino-acid chain; its full sequence is Photosystem I reaction center subunit VIII (36 aa).

The chain crosses the membrane as a helical span at residues 8–28 (SFFVPLVCLVFPAIAMAFLFV).

This sequence belongs to the PsaI family.

Its subcellular location is the plastid. It is found in the chloroplast thylakoid membrane. In terms of biological role, may help in the organization of the PsaL subunit. This chain is Photosystem I reaction center subunit VIII, found in Chara vulgaris (Common stonewort).